Consider the following 198-residue polypeptide: Recombination protein RecR (198 aa).

The C4-type zinc finger occupies 56 to 71; sequence CHVCGNVDTGDPCGIC. The region spanning 79-174 is the Toprim domain; sequence RMLCVVEEVA…RLTQLAHGLP (96 aa).

The protein belongs to the RecR family.

May play a role in DNA repair. It seems to be involved in an RecBC-independent recombinational process of DNA repair. It may act with RecF and RecO. The polypeptide is Recombination protein RecR (Rhizorhabdus wittichii (strain DSM 6014 / CCUG 31198 / JCM 15750 / NBRC 105917 / EY 4224 / RW1) (Sphingomonas wittichii)).